Consider the following 261-residue polypeptide: 5'-nucleotidase SurE (261 aa).

The a divalent metal cation site is built by D12, D13, S43, and N99.

Belongs to the SurE nucleotidase family. The cofactor is a divalent metal cation.

It is found in the cytoplasm. It carries out the reaction a ribonucleoside 5'-phosphate + H2O = a ribonucleoside + phosphate. In terms of biological role, nucleotidase that shows phosphatase activity on nucleoside 5'-monophosphates. This Polynucleobacter asymbioticus (strain DSM 18221 / CIP 109841 / QLW-P1DMWA-1) (Polynucleobacter necessarius subsp. asymbioticus) protein is 5'-nucleotidase SurE.